Reading from the N-terminus, the 242-residue chain is ATP synthase subunit a (242 aa).

A run of 6 helical transmembrane segments spans residues 29–49 (SSIY…LAFY), 84–104 (FIPL…LGMT), 114–134 (IIVT…VGFI), 140–160 (FLTL…MIVI), 189–209 (VIAS…IPLM), and 210–230 (VILI…FTIL).

Belongs to the ATPase A chain family. F-type ATPases have 2 components, CF(1) - the catalytic core - and CF(0) - the membrane proton channel. CF(1) has five subunits: alpha(3), beta(3), gamma(1), delta(1), epsilon(1). CF(0) has three main subunits: a(1), b(2) and c(9-12). The alpha and beta chains form an alternating ring which encloses part of the gamma chain. CF(1) is attached to CF(0) by a central stalk formed by the gamma and epsilon chains, while a peripheral stalk is formed by the delta and b chains.

It localises to the cell inner membrane. Its function is as follows. Key component of the proton channel; it plays a direct role in the translocation of protons across the membrane. The sequence is that of ATP synthase subunit a from Rickettsia prowazekii (strain Madrid E).